We begin with the raw amino-acid sequence, 493 residues long: Aerolysin (493 aa).

A signal peptide spans 1 to 23 (MQKIKLTGLSLIISGLLMAQAQA). Cystine bridges form between C42–C98 and C182–C187. The tract at residues 68–84 (WQISGLANGWVIMGPGY) is interaction with host N-linked glycan. Residues 256–288 (YGLSEKVTTKNKFKWPLVGETELSIEIAANQSW) form a part of the transmembrane beta-barrel after proteolytic activation of the toxin and insertion into the host membrane region. Positions 346 to 355 (RWGGNAWYTH) are interaction with glycans from host GPI-anchor. A propeptide spanning residues 446-493 (AADSKVRRARSVDGAGQGLRLEIPLDAQELSGLGFNNVSLSVTPAANQ) is cleaved from the precursor.

Belongs to the aerolysin family. As to quaternary structure, homodimer in solution; homoheptamer in the host membrane. After binding to GPI-anchored proteins in target membranes and proteolytic removal of the C-terminal propeptide, the protein assembles into a heptameric pre-pore complex. A further conformation change leads to insertion into the host membrane. Proteolytic cleavage and subsequent release of the propeptide trigger a major conformation change, leading to the formation of a heptameric pre-pore that then inserts into the host membrane.

It is found in the secreted. It localises to the host cell membrane. In terms of biological role, secreted, cytolytic toxin that forms pores in host membranes after proteolytic removal of a C-terminal propeptide, leading to destruction of the membrane permeability barrier and host cell death. The pores are formed by transmembrane beta-strands and are approximately 3 nm in diameter. The chain is Aerolysin (aerA) from Aeromonas hydrophila.